The sequence spans 452 residues: Xaa-Pro dipeptidase 1 (452 aa).

Residues Asp-247, Asp-258, His-338, Glu-383, and Glu-422 each coordinate Mn(2+).

It belongs to the peptidase M24B family. Bacterial-type prolidase subfamily. Mn(2+) is required as a cofactor.

The catalysed reaction is Xaa-L-Pro dipeptide + H2O = an L-alpha-amino acid + L-proline. Its function is as follows. Splits dipeptides with a prolyl residue in the C-terminal position. In Idiomarina loihiensis (strain ATCC BAA-735 / DSM 15497 / L2-TR), this protein is Xaa-Pro dipeptidase 1.